The sequence spans 154 residues: Endoribonuclease YbeY (154 aa).

Zn(2+) contacts are provided by histidine 113, histidine 117, and histidine 123.

Belongs to the endoribonuclease YbeY family. The cofactor is Zn(2+).

The protein localises to the cytoplasm. Its function is as follows. Single strand-specific metallo-endoribonuclease involved in late-stage 70S ribosome quality control and in maturation of the 3' terminus of the 16S rRNA. The polypeptide is Endoribonuclease YbeY (Anaplasma marginale (strain Florida)).